The chain runs to 117 residues: Immunoglobulin heavy variable 3-30-3 (117 aa).

The first 19 residues, 1–19, serve as a signal peptide directing secretion; sequence MEFGLSWVFLVALLRGVQC. A Pyrrolidone carboxylic acid modification is found at Q20. A framework-1 region spans residues 20 to 44; the sequence is QVQLVESGGGVVQPGRSLRLSCAAS. Residues 20–117 form the Ig-like domain; it reads QVQLVESGGG…EDTAVYYCAR (98 aa). C41 and C115 are disulfide-bonded. The interval 45 to 52 is complementarity-determining-1; sequence GFTFSSYA. A framework-2 region spans residues 53-69; the sequence is MHWVRQAPGKGLEWVAV. A complementarity-determining-2 region spans residues 70-77; sequence ISYDGSNK. Residues 78 to 115 are framework-3; that stretch reads YYADSVKGRFTISRDNSKNTLYLQMNSLRAEDTAVYYC. The complementarity-determining-3 stretch occupies residues 116–117; sequence AR.

As to quaternary structure, immunoglobulins are composed of two identical heavy chains and two identical light chains; disulfide-linked.

The protein resides in the secreted. The protein localises to the cell membrane. Functionally, v region of the variable domain of immunoglobulin heavy chains that participates in the antigen recognition. Immunoglobulins, also known as antibodies, are membrane-bound or secreted glycoproteins produced by B lymphocytes. In the recognition phase of humoral immunity, the membrane-bound immunoglobulins serve as receptors which, upon binding of a specific antigen, trigger the clonal expansion and differentiation of B lymphocytes into immunoglobulins-secreting plasma cells. Secreted immunoglobulins mediate the effector phase of humoral immunity, which results in the elimination of bound antigens. The antigen binding site is formed by the variable domain of one heavy chain, together with that of its associated light chain. Thus, each immunoglobulin has two antigen binding sites with remarkable affinity for a particular antigen. The variable domains are assembled by a process called V-(D)-J rearrangement and can then be subjected to somatic hypermutations which, after exposure to antigen and selection, allow affinity maturation for a particular antigen. The polypeptide is Immunoglobulin heavy variable 3-30-3 (Homo sapiens (Human)).